The primary structure comprises 405 residues: Phosphoglycerate kinase (405 aa).

Residues 24-26 (DFN), Arg40, 63-66 (HLGR), Arg122, and Arg162 contribute to the substrate site. ATP contacts are provided by residues Lys212, Glu331, and 361 to 364 (GGDS).

The protein belongs to the phosphoglycerate kinase family. As to quaternary structure, monomer.

The protein resides in the cytoplasm. It carries out the reaction (2R)-3-phosphoglycerate + ATP = (2R)-3-phospho-glyceroyl phosphate + ADP. Its pathway is carbohydrate degradation; glycolysis; pyruvate from D-glyceraldehyde 3-phosphate: step 2/5. The sequence is that of Phosphoglycerate kinase from Corynebacterium glutamicum (strain R).